The sequence spans 315 residues: Putative steroid dehydrogenase 3 (315 aa).

An NADP(+)-binding site is contributed by 47–76 (ASWAVITGGTDGIGKSFSFELAKRGFNIYI). The active site involves Y202.

The protein belongs to the short-chain dehydrogenases/reductases (SDR) family. 17-beta-HSD 3 subfamily.

In Caenorhabditis elegans, this protein is Putative steroid dehydrogenase 3 (stdh-3).